A 707-amino-acid chain; its full sequence is Dendrin (707 aa).

Disordered stretches follow at residues 1–22 (MLDGPLFSEGPDSPRELQDEES), 67–86 (QNRTCRLRPGSPEPPPRRPW), 94–195 (ATNW…PWGG), 213–273 (AGTA…KKRL), and 342–377 (TEVALSGSTISSPPRPVPRSRQHLRGSRKGKEGSEE). A coiled-coil region spans residues 103–134 (AEVRAREQEKRKAASQEREAKETERKRRKAGG). Over residues 105 to 127 (VRAREQEKRKAASQEREAKETER) the composition is skewed to basic and acidic residues. Positions 113–131 (RKAASQEREAKETERKRRK) are nuclear localization. The tract at residues 186–236 (GVAWAGPWGGRRPGPPSYEAHLLLRGAAGTAPRRRWDRPPPYVAPPSYEGP) is interaction with MAGI2. Residues 340–434 (PVTEVALSGS…LEVWKVTRRA (95 aa)) are interaction with ACTN1. Positions 359 to 369 (PRSRQHLRGSR) are enriched in basic residues. Serine 387 is subject to Phosphoserine. Disordered stretches follow at residues 389 to 421 (KKPPVRHSQTLPRPWAPGGTGWKESLGQREGTE) and 517 to 707 (RVLN…GKRE). Positions 406 to 707 (GGTGWKESLG…TRKTPQGKRE (302 aa)) are interaction with CD2AP and NPHS1. Basic and acidic residues-rich tracts occupy residues 524-544 (EGREFEAEGRQQGDSSLEERS) and 692-707 (GLVREDTRKTPQGKRE).

Forms a ternary complex with MAGI2 and SH3KBP1; recruits DDN to the cytoplasm. Interacts with MAGI1. Interacts with ACTN1 and may interact with WWC1. Interacts with the podocyte slit diaphragm proteins CD2AP, NPHS1 and NPHS2; the interaction with CD2AP and NPHS1 is direct. Specifically expressed in forebrain structures, particularly in neocortex, olfactory bulb, hippocampus, caudate-putamen, and limbic system (at protein level). Also detected in spleen, liver, kidney and placenta (at protein level).

The protein resides in the cell projection. It is found in the dendritic spine membrane. It localises to the cytoplasm. Its subcellular location is the endoplasmic reticulum membrane. The protein localises to the perikaryon. The protein resides in the nucleus. In terms of biological role, promotes apoptosis of kidney glomerular podocytes. Podocytes are highly specialized cells essential to the ultrafiltration of blood, resulting in the extraction of urine and the retention of protein. The polypeptide is Dendrin (Ddn) (Rattus norvegicus (Rat)).